Consider the following 1478-residue polypeptide: Serine/threonine-protein kinase BCK1/SLK1/SSP31 (1478 aa).

Disordered regions lie at residues 1-70, 99-126, 217-359, and 373-427; these read MPFL…TSSQ, TSFT…GGNS, NVTN…RRHH, and FGSG…KGNL. Residues 29–49 are compositionally biased toward low complexity; it reads PTSSVASTKSSSKSPRATSRK. Composition is skewed to polar residues over residues 58 to 70 and 99 to 110; these read QFPN…TSSQ and TSFTNSSYKNDN. The span at 111–126 shows a compositional bias: low complexity; the sequence is GPSSLSDSRKSSGGNS. The span at 223–233 shows a compositional bias: basic residues; the sequence is IRQKSASKLKS. 2 stretches are compositionally biased toward polar residues: residues 253-273 and 281-297; these read DISN…SGPS and LHST…SSLY. Composition is skewed to low complexity over residues 298–320 and 342–353; these read RRSF…SPSN and SASPPASPSYPS. 2 stretches are compositionally biased toward polar residues: residues 386–396 and 407–420; these read NPQGHSLSSEN and TNVS…SLPT. Residue threonine 407 is modified to Phosphothreonine. Phosphoserine is present on residues serine 411 and serine 491. Residues 644 to 671 form a disordered region; that stretch reads KPKPAPLTSENNVPLKSVKSKSSMRSGT. Low complexity predominate over residues 659-671; it reads KSVKSKSSMRSGT. Serine 747 bears the Phosphoserine mark. Disordered stretches follow at residues 752–877, 895–939, 960–1021, and 1053–1116; these read LNLP…ASTH, KTDQ…RGNS, ADAP…TQDK, and TEGI…TPKR. The segment covering 765 to 777 has biased composition (polar residues); sequence TPITENESKSSFQ. Basic and acidic residues predominate over residues 779 to 809; sequence LRKDEGTEIDFNHRRESPYTKPELAPKREAP. Residues 813-827 are compositionally biased toward polar residues; it reads ANTSPQRTLSTSKQN. At serine 816 the chain carries Phosphoserine. 2 stretches are compositionally biased toward low complexity: residues 851 to 870 and 914 to 925; these read QLLS…LTSS and NRSNSTVSTSNS. Over residues 967-977 the composition is skewed to acidic residues; it reads DSDDSDDDSSS. The segment covering 994 to 1011 has biased composition (basic and acidic residues); that stretch reads NENKKDEKSDNSSTHSDE. Serine 1058 and serine 1061 each carry phosphoserine. Positions 1058–1083 are enriched in low complexity; the sequence is SPTSPKSLDSLLSPKNVASSRTEPST. Serine 1134 bears the Phosphoserine; by PKC mark. Residues 1175 to 1440 enclose the Protein kinase domain; that stretch reads WMKGEMIGKG…ANELLSHPFS (266 aa). Residues 1181–1189 and lysine 1204 each bind ATP; that span reads IGKGSFGAV. The active-site Proton acceptor is aspartate 1303.

Belongs to the protein kinase superfamily. STE Ser/Thr protein kinase family. MAP kinase kinase kinase subfamily.

It is found in the cytoplasm. It carries out the reaction L-seryl-[protein] + ATP = O-phospho-L-seryl-[protein] + ADP + H(+). The catalysed reaction is L-threonyl-[protein] + ATP = O-phospho-L-threonyl-[protein] + ADP + H(+). Functionally, serine/threonine protein kinase involved in a signal transduction pathway that plays a role in yeast cell morphogenesis and cell growth. This pathway seems to start by SMP3; then involve the kinase PKC1 that may act on this kinase. BCK1 probably phosphorylates MKK1 and MKK2 which themselves phosphorylate the MPK1 kinase. In Saccharomyces cerevisiae (strain ATCC 204508 / S288c) (Baker's yeast), this protein is Serine/threonine-protein kinase BCK1/SLK1/SSP31 (BCK1).